The following is a 133-amino-acid chain: p53 and DNA damage-regulated protein 1 (133 aa).

Belongs to the prefoldin subunit beta family. As to quaternary structure, component of the PAQosome complex which is responsible for the biogenesis of several protein complexes and which consists of R2TP complex members RUVBL1, RUVBL2, RPAP3 and PIH1D1, URI complex members PFDN2, PFDN6, PDRG1, UXT and URI1 as well as ASDURF, POLR2E and DNAAF10/WDR92.

It localises to the cytoplasm. Its function is as follows. May play a role in chaperone-mediated protein folding. This Rattus norvegicus (Rat) protein is p53 and DNA damage-regulated protein 1 (Pdrg1).